Here is a 349-residue protein sequence, read N- to C-terminus: KH domain-containing, RNA-binding, signal transduction-associated protein 2 (349 aa).

Residues 65–135 (LIPVKQYPKF…HLSDELHVLI (71 aa)) form the KH domain. Disordered regions lie at residues 181–263 (SEES…PPPA) and 320–349 (EEWTTTRSSLKAPPPRSARGGYREHPYGRY). Over residues 218–231 (RGVLTPRGTTVTRG) the composition is skewed to low complexity. 2 positions are modified to omega-N-methylarginine: Arg-230 and Arg-240. The segment covering 340 to 349 (GYREHPYGRY) has biased composition (basic and acidic residues).

The protein belongs to the KHDRBS family. As to quaternary structure, self-associates to form homooligomers. Interacts with SAFB, SFRS9 and YTHDC1. Found in a complex with KHDRBS1, KHDRBS2 and KHDRBS3. Interacts with RBMX. Interacts with the SH3 domains of FYN and PLCG1. Interacts with the SH2 domains of FYN, GRAP2, PLCG1 and RASA1. Interacts with RBMX. Post-translationally, methylated. Phosphorylated on tyrosine residues by FYN. Tyrosine phosphorylated by PTK6 and SRC. Tyrosine phosphorylated by SRC during mitosis. Expressed in the cortex, cerebellum, striatum, midbrain, brainstem and thalamus of the brain (at protein level). Expressed in neurons (at protein level). Expressed in brain and testis. Expressed in the dentate gyrus of the hippocampus.

The protein resides in the nucleus. In terms of biological role, RNA-binding protein that plays a role in the regulation of alternative splicing and influences mRNA splice site selection and exon inclusion. Its phosphorylation by FYN inhibits its ability to regulate splice site selection. Induces an increased concentration-dependent incorporation of exon in CD44 pre-mRNA by direct binding to purine-rich exonic enhancer. May function as an adapter protein for Src kinases during mitosis. Binds both poly(A) and poly(U) homopolymers. Phosphorylation by PTK6 inhibits its RNA-binding ability. The protein is KH domain-containing, RNA-binding, signal transduction-associated protein 2 (Khdrbs2) of Rattus norvegicus (Rat).